The following is a 212-amino-acid chain: Acyl-homoserine-lactone synthase (212 aa).

This sequence belongs to the autoinducer synthase family.

The enzyme catalyses a fatty acyl-[ACP] + S-adenosyl-L-methionine = an N-acyl-L-homoserine lactone + S-methyl-5'-thioadenosine + holo-[ACP] + H(+). Its function is as follows. Required for the synthesis of autoinducer molecules which bind to RaiR and that are involved in the restriction of nodule number. This is Acyl-homoserine-lactone synthase (raiI) from Rhizobium etli.